The sequence spans 101 residues: NADH-quinone oxidoreductase subunit K 1 (101 aa).

3 helical membrane-spanning segments follow: residues 4 to 24 (IGTM…TVGV), 31 to 51 (VVIL…LVAF), and 64 to 84 (IFVM…VIAF).

It belongs to the complex I subunit 4L family. In terms of assembly, NDH-1 is composed of 14 different subunits. Subunits NuoA, H, J, K, L, M, N constitute the membrane sector of the complex.

The protein resides in the cell inner membrane. It catalyses the reaction a quinone + NADH + 5 H(+)(in) = a quinol + NAD(+) + 4 H(+)(out). In terms of biological role, NDH-1 shuttles electrons from NADH, via FMN and iron-sulfur (Fe-S) centers, to quinones in the respiratory chain. The immediate electron acceptor for the enzyme in this species is believed to be ubiquinone. Couples the redox reaction to proton translocation (for every two electrons transferred, four hydrogen ions are translocated across the cytoplasmic membrane), and thus conserves the redox energy in a proton gradient. This Koribacter versatilis (strain Ellin345) protein is NADH-quinone oxidoreductase subunit K 1.